The sequence spans 181 residues: MTETTSAKPKKVSKPKAKPTHPPTSVMVMAAIKALKERNGSSLPAIKKYIAANYKVDVVKNAHFIKKALKSLVEKKKLVQTKGAGASGSFKLAAAAKAEKPKAVAKPKKAKTPKKKAAATKKPTGEKKAKTPKKKPAAKKPAAAKPKKAKTPKKKAAPAKKTPVKKVKKTSPKKKAAPKKK.

2 disordered regions span residues 1-23 (MTETTSAKPKKVSKPKAKPTHPP) and 81-181 (TKGA…PKKK). Residues 8–19 (KPKKVSKPKAKP) are compositionally biased toward basic residues. The H15 domain occupies 20–94 (THPPTSVMVM…GASGSFKLAA (75 aa)). 2 stretches are compositionally biased toward basic residues: residues 103 to 119 (AVAKPKKAKTPKKKAAA) and 145 to 181 (KPKKAKTPKKKAAPAKKTPVKKVKKTSPKKKAAPKKK).

Belongs to the histone H1/H5 family.

The protein localises to the nucleus. It localises to the chromosome. Its function is as follows. Histones H1 are necessary for the condensation of nucleosome chains into higher-order structures. In Tigriopus californicus (Marine copepod), this protein is Histone H1.